Consider the following 608-residue polypeptide: Myosin light chain kinase 2, skeletal/cardiac muscle (608 aa).

The segment at 1-160 (MATENGAVEL…RGSPAFLHSP (160 aa)) is disordered. Ala-2 carries the N-acetylalanine modification. 2 stretches are compositionally biased toward basic and acidic residues: residues 31-43 (AAEKDPAPPDPEK) and 50-63 (TKQDPDPSTPKKDA). Residues 82–91 (GSQGPAGEGG) are compositionally biased toward gly residues. Residues 116-127 (ASEKKPEAEKGP) show a composition bias toward basic and acidic residues. A phosphoserine mark is found at Ser-153, Ser-159, and Ser-161. The interval 214–235 (QKEAGEKAPGQADQAKVQGDTS) is disordered. The Protein kinase domain maps to 297 to 552 (MNSKEALGGG…AAQCLAHPWL (256 aa)). Residues 303–311 (LGGGKFGAV) and Lys-326 contribute to the ATP site. The active-site Proton acceptor is the Asp-418. Thr-457 is subject to Phosphothreonine. Residues 586-598 (IAVSAANRFKKIS) are calmodulin-binding.

This sequence belongs to the protein kinase superfamily. CAMK Ser/Thr protein kinase family. As to quaternary structure, may interact with centrin.

The protein resides in the cytoplasm. The enzyme catalyses L-seryl-[myosin light chain] + ATP = O-phospho-L-seryl-[myosin light chain] + ADP + H(+). The catalysed reaction is L-threonyl-[myosin light chain] + ATP = O-phospho-L-threonyl-[myosin light chain] + ADP + H(+). In terms of biological role, implicated in the level of global muscle contraction and cardiac function. Phosphorylates a specific serine in the N-terminus of a myosin light chain. The chain is Myosin light chain kinase 2, skeletal/cardiac muscle (MYLK2) from Oryctolagus cuniculus (Rabbit).